The sequence spans 382 residues: Protein-arginine rhamnosyltransferase (382 aa).

18–19 lines the dTDP pocket; it reads FG. Asp-20 functions as the Proton acceptor in the catalytic mechanism. DTDP-beta-L-rhamnose contacts are provided by residues Asp-20, Tyr-187, 250-252, and 268-272; these read VPQ and RGEDS. Residues Tyr-187, 250-252, and 268-272 each bind dTDP; these read VPQ and RGEDS. Residue Glu-270 is part of the active site.

This sequence belongs to the glycosyltransferase 104 family.

It carries out the reaction dTDP-beta-L-rhamnose + L-arginyl-[protein] = N(omega)-(alpha-L-rhamnosyl)-L-arginyl-[protein] + dTDP + H(+). Protein-arginine rhamnosyltransferase that catalyzes the transfer of a single rhamnose to elongation factor P (EF-P) on 'Lys-32', a modification required for EF-P-dependent rescue of polyproline stalled ribosomes. The protein is Protein-arginine rhamnosyltransferase of Neisseria meningitidis serogroup B / serotype 15 (strain H44/76).